The following is a 467-amino-acid chain: Indoleacetamide hydrolase (467 aa).

Catalysis depends on charge relay system residues Lys74 and Ser149. Ser173 acts as the Acyl-ester intermediate in catalysis.

It belongs to the amidase family.

Its pathway is plant hormone metabolism; auxin biosynthesis. In terms of biological role, hydrolyzes indole-3-acetamide (IAM) into indole-3-acetic acid (IAA). The polypeptide is Indoleacetamide hydrolase (TA-iaaH) (Agrobacterium vitis (Rhizobium vitis)).